Consider the following 263-residue polypeptide: Metaxin-2 (263 aa).

Residue Ser2 is modified to N-acetylserine.

The protein belongs to the metaxin family. In terms of assembly, interacts with MTX1/metaxin-1. Associates with the mitochondrial contact site and cristae organizing system (MICOS) complex, composed of at least MICOS10/MIC10, CHCHD3/MIC19, CHCHD6/MIC25, APOOL/MIC27, IMMT/MIC60, APOO/MIC23/MIC26 and QIL1/MIC13. This complex was also known under the names MINOS or MitOS complex. The MICOS complex associates with mitochondrial outer membrane proteins SAMM50, MTX1 and MTX2 (together described as components of the mitochondrial outer membrane sorting assembly machinery (SAM) complex) and DNAJC11, mitochondrial inner membrane protein TMEM11 and with HSPA9. The MICOS and SAM complexes together with DNAJC11 are part of a large protein complex spanning both membranes termed the mitochondrial intermembrane space bridging (MIB) complex.

The protein resides in the mitochondrion outer membrane. It localises to the mitochondrion. Involved in transport of proteins into the mitochondrion. This chain is Metaxin-2 (Mtx2), found in Mus musculus (Mouse).